The chain runs to 292 residues: Ubiquinone biosynthesis protein UbiV (292 aa).

4 residues coordinate [4Fe-4S] cluster: cysteine 39, cysteine 180, cysteine 193, and cysteine 197.

This sequence belongs to the peptidase U32 family. UbiV subfamily. As to quaternary structure, forms a heterodimer with UbiU. Requires [4Fe-4S] cluster as cofactor.

It functions in the pathway cofactor biosynthesis; ubiquinone biosynthesis. Required for O(2)-independent ubiquinone (coenzyme Q) biosynthesis. Together with UbiU, is essential for the C6-hydroxylation reaction in the oxygen-independent ubiquinone biosynthesis pathway. The polypeptide is Ubiquinone biosynthesis protein UbiV (Escherichia coli (strain K12)).